We begin with the raw amino-acid sequence, 463 residues long: MYTYMEYLQKCFYKSTNWNEDNIYSNITATSQALLDFPIPNGFKIDSSSKTTDYSASSFTLSNHHQINGSLAYLYSSIPLTNTMGTKDVSLQDAIAGFRIIEPSVGLSSKLTNNIIQNRSSLLYGRMYFPGSALEAMIIKRITKNSQLLIKCVNNPHLEKNGTMIVYLQNNTAKYSRELIYSTNEALIGLRCLYNLGNDATSHNFPHVNPAVIPKFDNSVISIGTELWYAARTMSPGLSAALRYSTRSTSTGKPLTMTLAINPIVGHISSTYTVKTSVASTFCSKYDFNVFSYASNLSLGFELYSYANKKKNTFPSFEHHEIYSSSEENKYLKKHPELQRHHRVPIKSHKYQGNRTIINPIQNLDNVYHINPTLLSSTTNSPTNNDNSNTSETVTAAFQNLVNESDFSSVFKFSTSLNDKVVKILWEGRLKDFLVSTGVKLSLNPITNTPEFNKLGISFSYAL.

It belongs to the MDM10 family. As to quaternary structure, component of the ER-mitochondria encounter structure (ERMES) or MDM complex, composed of MMM1, MDM10, MDM12 and MDM34. Associates with the mitochondrial outer membrane sorting assembly machinery SAM(core) complex.

It is found in the mitochondrion outer membrane. In terms of biological role, component of the ERMES/MDM complex, which serves as a molecular tether to connect the endoplasmic reticulum and mitochondria. Components of this complex are involved in the control of mitochondrial shape and protein biogenesis and may function in phospholipid exchange. MDM10 is involved in the late assembly steps of the general translocase of the mitochondrial outer membrane (TOM complex). Functions in the TOM40-specific route of the assembly of outer membrane beta-barrel proteins, including the association of TOM40 with the receptor TOM22 and small TOM proteins. Can associate with the SAM(core) complex as well as the MDM12-MMM1 complex, both involved in late steps of the major beta-barrel assembly pathway, that is responsible for biogenesis of all outer membrane beta-barrel proteins. May act as a switch that shuttles between both complexes and channels precursor proteins into the TOM40-specific pathway. Plays a role in mitochondrial morphology and in the inheritance of mitochondria. This is Mitochondrial distribution and morphology protein 10 from Candida dubliniensis (strain CD36 / ATCC MYA-646 / CBS 7987 / NCPF 3949 / NRRL Y-17841) (Yeast).